We begin with the raw amino-acid sequence, 207 residues long: NADH-quinone oxidoreductase subunit C (207 aa).

The protein belongs to the complex I 30 kDa subunit family. As to quaternary structure, NDH-1 is composed of 14 different subunits. Subunits NuoB, C, D, E, F, and G constitute the peripheral sector of the complex.

It is found in the cell inner membrane. It catalyses the reaction a quinone + NADH + 5 H(+)(in) = a quinol + NAD(+) + 4 H(+)(out). Functionally, NDH-1 shuttles electrons from NADH, via FMN and iron-sulfur (Fe-S) centers, to quinones in the respiratory chain. The immediate electron acceptor for the enzyme in this species is believed to be ubiquinone. Couples the redox reaction to proton translocation (for every two electrons transferred, four hydrogen ions are translocated across the cytoplasmic membrane), and thus conserves the redox energy in a proton gradient. The chain is NADH-quinone oxidoreductase subunit C from Rickettsia felis (strain ATCC VR-1525 / URRWXCal2) (Rickettsia azadi).